A 978-amino-acid polypeptide reads, in one-letter code: Mast/stem cell growth factor receptor Kit (978 aa).

An N-terminal signal peptide occupies residues 1–25 (MRGARGAWDFLFVLLLLLLVQTGSS). Residues 26–525 (QPSVSPGELS…QIHAHTLFTP (500 aa)) lie on the Extracellular side of the membrane. Ig-like C2-type domains are found at residues 27 to 112 (PSVS…VFVR), 121 to 205 (DLPL…LKVR), 212 to 309 (PVVS…LEVV), 318 to 411 (PMMN…VNVN), and 414 to 508 (PEIL…FNFA). A disulfide bridge links Cys-58 with Cys-97. N-linked (GlcNAc...) asparagine glycosylation is found at Asn-94, Asn-130, and Asn-145. Cystine bridges form between Cys-136/Cys-186, Cys-151/Cys-183, and Cys-233/Cys-291. N-linked (GlcNAc...) asparagine glycosylation is found at Asn-284, Asn-294, Asn-301, Asn-321, Asn-353, Asn-368, Asn-401, Asn-464, and Asn-487. Cysteines 429 and 492 form a disulfide. A helical membrane pass occupies residues 526–546 (LLIGFVIAAGLMCIFVMILTY). The Cytoplasmic segment spans residues 547–978 (KYLQKPMYEV…TQPLLVHEDV (432 aa)). Phosphotyrosine is present on residues Tyr-548 and Tyr-554. Tyr-569 contributes to the Mg(2+) binding site. Phosphotyrosine; by autocatalysis occurs at positions 569 and 571. Residues 569 to 571 (YVY) are important for interaction with phosphotyrosine-binding proteins. Positions 590–939 (LSFGKTLGAG…ISESTNHIYS (350 aa)) constitute a Protein kinase domain. Residues 597-604 (GAGAFGKV), Lys-624, and 672-678 (EYCCYGD) contribute to the ATP site. A phosphotyrosine; by autocatalysis mark is found at Tyr-704 and Tyr-722. The residue at position 731 (Tyr-731) is a Phosphotyrosine. A phosphoserine; by PKC/PRKCA mark is found at Ser-743 and Ser-748. Asp-794 functions as the Proton acceptor in the catalytic mechanism. Residue Arg-798 coordinates ATP. Mg(2+) contacts are provided by Asn-799 and Asp-812. Ser-823 carries the post-translational modification Phosphoserine. Tyr-825 is modified (phosphotyrosine; by autocatalysis). Ser-893 carries the phosphoserine modification. Tyr-902 is subject to Phosphotyrosine. Tyr-938 is subject to Phosphotyrosine; by autocatalysis. Ser-961 carries the phosphoserine modification.

This sequence belongs to the protein kinase superfamily. Tyr protein kinase family. CSF-1/PDGF receptor subfamily. In terms of assembly, monomer in the absence of bound KITLG/SCF. Homodimer in the presence of bound KITLG/SCF, forming a heterotetramer with two KITLG/SCF molecules. Interacts (via phosphorylated tyrosine residues) with the adapter proteins GRB2 and GRB7 (via SH2 domain), and SH2B2/APS. Interacts (via C-terminus) with MPDZ (via the tenth PDZ domain). Interacts (via phosphorylated tyrosine residues) with PIK3R1 and PIK3CD. Interacts (via phosphorylated tyrosine) with CRK (isoform Crk-II), FYN, SHC1 and MATK/CHK (via SH2 domain). Interacts with LYN and FES/FPS. Interacts (via phosphorylated tyrosine residues) with the protein phosphatases PTPN6/SHP-1 (via SH2 domain), PTPN11/SHP-2 (via SH2 domain) and PTPRU. Interacts with PLCG1. Interacts with DOK1 and TEC. Interacts with IL1RAP (independent of stimulation with KITLG/SCF). A mast cell-specific KITLG/SCF-induced interleukin-33 signaling complex contains IL1RL1, IL1RAP, KIT and MYD88. In terms of processing, ubiquitinated by SOCS6. KIT is rapidly ubiquitinated after autophosphorylation induced by KITLG/SCF binding, leading to internalization and degradation. Post-translationally, autophosphorylated on tyrosine residues. KITLG/SCF binding promotes autophosphorylation. Phosphorylated tyrosine residues are important for interaction with specific binding partners.

The protein resides in the cell membrane. The enzyme catalyses L-tyrosyl-[protein] + ATP = O-phospho-L-tyrosyl-[protein] + ADP + H(+). Its activity is regulated as follows. Present in an inactive conformation in the absence of bound ligand. KITLG/SCF binding leads to dimerization and activation by autophosphorylation on tyrosine residues. Activity is down-regulated by PRKCA-mediated phosphorylation on serine residues. Its function is as follows. Tyrosine-protein kinase that acts as a cell-surface receptor for the cytokine KITLG/SCF and plays an essential role in the regulation of cell survival and proliferation, hematopoiesis, stem cell maintenance, gametogenesis, mast cell development, migration and function, and in melanogenesis. In response to KITLG/SCF binding, KIT can activate several signaling pathways. Phosphorylates PIK3R1, PLCG1, SH2B2/APS and CBL. Activates the AKT1 signaling pathway by phosphorylation of PIK3R1, the regulatory subunit of phosphatidylinositol 3-kinase. Activated KIT also transmits signals via GRB2 and activation of RAS, RAF1 and the MAP kinases MAPK1/ERK2 and/or MAPK3/ERK1. Promotes activation of STAT family members STAT1, STAT3, STAT5A and STAT5B. Activation of PLCG1 leads to the production of the cellular signaling molecules diacylglycerol and inositol 1,4,5-trisphosphate. KIT signaling is modulated by protein phosphatases, and by rapid internalization and degradation of the receptor. Activated KIT promotes phosphorylation of the protein phosphatases PTPN6/SHP-1 and PTPRU, and of the transcription factors STAT1, STAT3, STAT5A and STAT5B. Promotes phosphorylation of PIK3R1, CBL, CRK (isoform Crk-II), LYN, MAPK1/ERK2 and/or MAPK3/ERK1, PLCG1, SRC and SHC1. The chain is Mast/stem cell growth factor receptor Kit (KIT) from Capra hircus (Goat).